We begin with the raw amino-acid sequence, 487 residues long: Serine/threonine-protein phosphatase 2A activator 1 (487 aa).

Disordered regions lie at residues 1 to 28 and 426 to 487; these read MPMI…SSST and GGIQ…PKPE.

The protein belongs to the PTPA-type PPIase family.

It localises to the cytoplasm. The protein localises to the nucleus. It carries out the reaction [protein]-peptidylproline (omega=180) = [protein]-peptidylproline (omega=0). PPIases accelerate the folding of proteins. It catalyzes the cis-trans isomerization of proline imidic peptide bonds in oligopeptides. Acts as a regulatory subunit for PP2A-like phosphatases modulating their activity or substrate specificity, probably by inducing a conformational change in the catalytic subunit, a direct target of the PPIase. Can reactivate inactive phosphatase PP2A-phosphatase methylesterase complexes (PP2Ai) in presence of ATP and Mg(2+) by dissociating the inactive form from the complex. This Mycosarcoma maydis (Corn smut fungus) protein is Serine/threonine-protein phosphatase 2A activator 1 (RRD1).